We begin with the raw amino-acid sequence, 279 residues long: Putative pyruvate, phosphate dikinase regulatory protein (279 aa).

Residue 153–160 (GVSRTSKT) participates in ADP binding.

Belongs to the pyruvate, phosphate/water dikinase regulatory protein family. PDRP subfamily.

It carries out the reaction N(tele)-phospho-L-histidyl/L-threonyl-[pyruvate, phosphate dikinase] + ADP = N(tele)-phospho-L-histidyl/O-phospho-L-threonyl-[pyruvate, phosphate dikinase] + AMP + H(+). It catalyses the reaction N(tele)-phospho-L-histidyl/O-phospho-L-threonyl-[pyruvate, phosphate dikinase] + phosphate + H(+) = N(tele)-phospho-L-histidyl/L-threonyl-[pyruvate, phosphate dikinase] + diphosphate. In terms of biological role, bifunctional serine/threonine kinase and phosphorylase involved in the regulation of the pyruvate, phosphate dikinase (PPDK) by catalyzing its phosphorylation/dephosphorylation. The protein is Putative pyruvate, phosphate dikinase regulatory protein of Bradyrhizobium diazoefficiens (strain JCM 10833 / BCRC 13528 / IAM 13628 / NBRC 14792 / USDA 110).